The sequence spans 420 residues: Pyruvate dehydrogenase E1 component subunit alpha, mitochondrial (420 aa).

The N-terminal 33 residues, 1–33, are a transit peptide targeting the mitochondrion; the sequence is MLAASFKRQPSQLVRGLGAVLRTPTRIGHVRTM. Pyruvate is bound by residues His-112, Tyr-138, Arg-139, Ala-177, Gly-185, Val-187, Asp-216, Gly-217, Ala-218, Asn-245, and Tyr-247. Thiamine diphosphate-binding residues include Tyr-138 and Arg-139. The thiamine diphosphate site is built by Gly-185, Val-187, Asp-216, Gly-217, Ala-218, and Asn-245. Position 216 (Asp-216) interacts with Mg(2+). Mg(2+)-binding residues include Asn-245 and Tyr-247. His-312 is a binding site for thiamine diphosphate. Ser-313 carries the post-translational modification Phosphoserine; by PDK1 and PDK2.

In terms of assembly, pyruvate dehydrogenase (E1) is a tetramer of 2 alpha and 2 beta subunits. Eukaryotic pyruvate dehydrogenase (PDH) complexes are organized as a core consisting of the oligomeric dihydrolipoamide acetyl-transferase (E2), around which are arranged multiple copies of pyruvate dehydrogenase (E1), dihydrolipoamide dehydrogenase (E3) and protein X (E3BP) bound by non-covalent bonds. Thiamine diphosphate is required as a cofactor. The cofactor is Mg(2+). In terms of processing, phosphorylated at Ser-313 by pyruvate dehydrogenase kinases PKP1 (PDK1) and PKP2 (PDK2), and dephosphorylated by pyruvate dehydrogenase phosphatases PTC5 and PTC6.

Its subcellular location is the mitochondrion matrix. It catalyses the reaction N(6)-[(R)-lipoyl]-L-lysyl-[protein] + pyruvate + H(+) = N(6)-[(R)-S(8)-acetyldihydrolipoyl]-L-lysyl-[protein] + CO2. With respect to regulation, E1 activity is regulated by phosphorylation (inactivation) and dephosphorylation (activation) of the alpha subunit. In terms of biological role, the pyruvate dehydrogenase complex catalyzes the overall conversion of pyruvate to acetyl-CoA and CO(2). The polypeptide is Pyruvate dehydrogenase E1 component subunit alpha, mitochondrial (PDA1) (Saccharomyces cerevisiae (strain ATCC 204508 / S288c) (Baker's yeast)).